The following is a 189-amino-acid chain: Thymidine kinase (189 aa).

ATP is bound by residues 9–16 (GTMNSGKT) and 85–88 (DESQ). E86 acts as the Proton acceptor in catalysis. Zn(2+)-binding residues include C143, C146, C180, and H183.

Belongs to the thymidine kinase family. In terms of assembly, homotetramer.

The protein resides in the cytoplasm. It carries out the reaction thymidine + ATP = dTMP + ADP + H(+). The sequence is that of Thymidine kinase from Streptococcus pyogenes serotype M6 (strain ATCC BAA-946 / MGAS10394).